Reading from the N-terminus, the 179-residue chain is Adenine phosphoribosyltransferase (179 aa).

This sequence belongs to the purine/pyrimidine phosphoribosyltransferase family. In terms of assembly, homodimer.

The protein resides in the cytoplasm. It carries out the reaction AMP + diphosphate = 5-phospho-alpha-D-ribose 1-diphosphate + adenine. The protein operates within purine metabolism; AMP biosynthesis via salvage pathway; AMP from adenine: step 1/1. Its function is as follows. Catalyzes a salvage reaction resulting in the formation of AMP, that is energically less costly than de novo synthesis. This Jannaschia sp. (strain CCS1) protein is Adenine phosphoribosyltransferase.